The chain runs to 396 residues: Tryptophan synthase beta chain (396 aa).

Lys-86 bears the N6-(pyridoxal phosphate)lysine mark.

It belongs to the TrpB family. In terms of assembly, tetramer of two alpha and two beta chains. Pyridoxal 5'-phosphate serves as cofactor.

The enzyme catalyses (1S,2R)-1-C-(indol-3-yl)glycerol 3-phosphate + L-serine = D-glyceraldehyde 3-phosphate + L-tryptophan + H2O. It participates in amino-acid biosynthesis; L-tryptophan biosynthesis; L-tryptophan from chorismate: step 5/5. In terms of biological role, the beta subunit is responsible for the synthesis of L-tryptophan from indole and L-serine. In Vibrio campbellii (strain ATCC BAA-1116), this protein is Tryptophan synthase beta chain.